The primary structure comprises 357 residues: S-adenosyl-L-methionine:benzoic acid/salicylic acid carboxyl methyltransferase 2 (357 aa).

S-adenosyl-L-homocysteine is bound at residue tyrosine 18. Glutamine 25 is a binding site for benzoate. The S-adenosyl-L-homocysteine site is built by cysteine 59, asparagine 64, aspartate 96, leucine 97, serine 135, and phenylalanine 136. Position 157 (tryptophan 157) interacts with benzoate. Mg(2+) contacts are provided by asparagine 168, aspartate 254, phenylalanine 256, and asparagine 257. Glutamine 260 contacts benzoate.

This sequence belongs to the methyltransferase superfamily. Type-7 methyltransferase family. Predominantly expressed in petal limbs and tubes of corollas.

The catalysed reaction is benzoate + S-adenosyl-L-methionine = methyl benzoate + S-adenosyl-L-homocysteine. The enzyme catalyses salicylate + S-adenosyl-L-methionine = methyl salicylate + S-adenosyl-L-homocysteine. The protein operates within aromatic compound metabolism. Converts benzoic acid into the volatile ester methyl benzoates. This scent, mostly produced in a rhythmical, diurnal manner, attracts the pollinators. This is S-adenosyl-L-methionine:benzoic acid/salicylic acid carboxyl methyltransferase 2 from Petunia hybrida (Petunia).